The sequence spans 153 residues: Insulin-like growth factor 1 (153 aa).

The b stretch occupies residues 49–77 (GPETLCGAELVDALQFVCGDRGFYFSKPT). 3 cysteine pairs are disulfide-bonded: cysteine 54–cysteine 96, cysteine 66–cysteine 109, and cysteine 95–cysteine 100. The tract at residues 78–89 (GYGSSSRRLHHK) is c. The a stretch occupies residues 90–110 (GIVDECCFQSCDLRRLEMYCA). A d region spans residues 111-118 (PIKPPKSA). Positions 119 to 153 (RSVRAQRHTDMPKAQKEVHLKNTSRGNTGNRNYRM) are cleaved as a propeptide — e peptide. A disordered region spans residues 119-153 (RSVRAQRHTDMPKAQKEVHLKNTSRGNTGNRNYRM). The segment covering 125–138 (RHTDMPKAQKEVHL) has biased composition (basic and acidic residues). A compositionally biased stretch (polar residues) spans 139-153 (KNTSRGNTGNRNYRM).

This sequence belongs to the insulin family. In terms of assembly, forms a ternary complex with IGFR1 and ITGAV:ITGB3. Forms a ternary complex with IGFR1 and ITGA6:ITGB4. Forms a ternary complex with IGFBP3 and ALS.

It localises to the secreted. The insulin-like growth factors, isolated from plasma, are structurally and functionally related to insulin but have a much higher growth-promoting activity. Acts as a ligand for IGF1R. Binds to the alpha subunit of IGF1R, leading to the activation of the intrinsic tyrosine kinase activity which autophosphorylates tyrosine residues in the beta subunit thus initiatiating a cascade of down-stream signaling events leading to activation of the PI3K-AKT/PKB and the Ras-MAPK pathways. Binds to integrins. Its binding to integrins and subsequent ternary complex formation with integrins and IGFR1 are essential for IGF1 signaling. This chain is Insulin-like growth factor 1, found in Gallus gallus (Chicken).